We begin with the raw amino-acid sequence, 565 residues long: Ubiquitin carboxyl-terminal hydrolase 21 (565 aa).

Composition is skewed to basic and acidic residues over residues 1 to 14 (MPQA…RTRE) and 58 to 70 (PPDE…DLGR). Positions 1 to 128 (MPQASEHRLG…LRPMGIALGG (128 aa)) are disordered. Low complexity predominate over residues 71–81 (GRTSGSRPRGP). Residues 104–116 (SRTNLTRSKSVSS) are compositionally biased toward polar residues. The Nuclear export signal signature appears at 134-152 (ELGAALSRLALRPEPPTLR). The 347-residue stretch at 212–558 (VGLRNLGNTC…EGYVLFYQLM (347 aa)) folds into the USP domain. The Nucleophile role is filled by cysteine 221. The segment at 324–347 (APPILASGPVPSPPRRGGALHEEP) is disordered. Positions 384, 387, 437, and 440 each coordinate Zn(2+). Histidine 518 serves as the catalytic Proton acceptor.

The protein belongs to the peptidase C19 family. USP21 subfamily. As to quaternary structure, interacts with BEND3.

The protein resides in the cytoplasm. It localises to the nucleus. It carries out the reaction Thiol-dependent hydrolysis of ester, thioester, amide, peptide and isopeptide bonds formed by the C-terminal Gly of ubiquitin (a 76-residue protein attached to proteins as an intracellular targeting signal).. In terms of biological role, deubiquitinates histone H2A, a specific tag for epigenetic transcriptional repression, thereby acting as a coactivator. Deubiquitination of histone H2A releaves the repression of di- and trimethylation of histone H3 at 'Lys-4', resulting in regulation of transcriptional initiation. Regulates gene expression via histone H2A deubiquitination. Deubiquitinates BAZ2A/TIP5 leading to its stabilization. Also capable of removing NEDD8 from NEDD8 conjugates but has no effect on Sentrin-1 conjugates. Also acts as a negative regulator of the ribosome quality control (RQC) by mediating deubiquitination of 40S ribosomal proteins RPS10/eS10 and RPS20/uS10, thereby antagonizing ZNF598-mediated 40S ubiquitination. This Rattus norvegicus (Rat) protein is Ubiquitin carboxyl-terminal hydrolase 21 (Usp21).